A 298-amino-acid chain; its full sequence is GTP cyclohydrolase FolE2 (298 aa).

It belongs to the GTP cyclohydrolase IV family.

The enzyme catalyses GTP + H2O = 7,8-dihydroneopterin 3'-triphosphate + formate + H(+). Its pathway is cofactor biosynthesis; 7,8-dihydroneopterin triphosphate biosynthesis; 7,8-dihydroneopterin triphosphate from GTP: step 1/1. Its function is as follows. Converts GTP to 7,8-dihydroneopterin triphosphate. The sequence is that of GTP cyclohydrolase FolE2 from Xylella fastidiosa (strain M12).